The following is a 447-amino-acid chain: Cysteine--tRNA ligase (447 aa).

C28 is a binding site for Zn(2+). A 'HIGH' region motif is present at residues 30-40 (PTVYNYIHIGN). Zn(2+) contacts are provided by C211, H236, and E240. Residues 268 to 272 (KMSKS) carry the 'KMSKS' region motif. K271 serves as a coordination point for ATP.

Belongs to the class-I aminoacyl-tRNA synthetase family. Monomer. Zn(2+) serves as cofactor.

It is found in the cytoplasm. It carries out the reaction tRNA(Cys) + L-cysteine + ATP = L-cysteinyl-tRNA(Cys) + AMP + diphosphate. The protein is Cysteine--tRNA ligase of Streptococcus pyogenes serotype M6 (strain ATCC BAA-946 / MGAS10394).